The following is a 292-amino-acid chain: ATP synthase gamma chain (292 aa).

It belongs to the ATPase gamma chain family. In terms of assembly, F-type ATPases have 2 components, CF(1) - the catalytic core - and CF(0) - the membrane proton channel. CF(1) has five subunits: alpha(3), beta(3), gamma(1), delta(1), epsilon(1). CF(0) has three main subunits: a, b and c.

The protein resides in the cell inner membrane. Produces ATP from ADP in the presence of a proton gradient across the membrane. The gamma chain is believed to be important in regulating ATPase activity and the flow of protons through the CF(0) complex. This Chlorobaculum tepidum (strain ATCC 49652 / DSM 12025 / NBRC 103806 / TLS) (Chlorobium tepidum) protein is ATP synthase gamma chain.